A 105-amino-acid polypeptide reads, in one-letter code: Flagellar transcriptional regulator FlhD (105 aa).

This sequence belongs to the FlhD family. In terms of assembly, homodimer; disulfide-linked. Forms a heterohexamer composed of two FlhC and four FlhD subunits. Each FlhC binds a FlhD dimer, forming a heterotrimer, and a hexamer assembles by dimerization of two heterotrimers.

It localises to the cytoplasm. In terms of biological role, functions in complex with FlhC as a master transcriptional regulator that regulates transcription of several flagellar and non-flagellar operons by binding to their promoter region. Activates expression of class 2 flagellar genes, including fliA, which is a flagellum-specific sigma factor that turns on the class 3 genes. Also regulates genes whose products function in a variety of physiological pathways. The polypeptide is Flagellar transcriptional regulator FlhD (Cupriavidus pinatubonensis (strain JMP 134 / LMG 1197) (Cupriavidus necator (strain JMP 134))).